Here is a 247-residue protein sequence, read N- to C-terminus: Fibroblast growth factor 14 (247 aa).

2 disordered regions span residues 1 to 38 (MAAAIASGLIRQKRQAREQHWDRPSASRRRSSPSKNRG) and 216 to 247 (ETVPKAGVTPSKSTSASAIMNGGKPVNKCKTT). Positions 15–25 (QAREQHWDRPS) are enriched in basic and acidic residues.

It belongs to the heparin-binding growth factors family. As to quaternary structure, interacts with SCN8A.

It localises to the nucleus. Its function is as follows. Probably involved in nervous system development and function. The sequence is that of Fibroblast growth factor 14 (Fgf14) from Rattus norvegicus (Rat).